We begin with the raw amino-acid sequence, 79 residues long: Small ribosomal subunit protein bS18 (79 aa).

Belongs to the bacterial ribosomal protein bS18 family. Part of the 30S ribosomal subunit. Forms a tight heterodimer with protein bS6.

Its function is as follows. Binds as a heterodimer with protein bS6 to the central domain of the 16S rRNA, where it helps stabilize the platform of the 30S subunit. This is Small ribosomal subunit protein bS18 from Bacillus velezensis (strain DSM 23117 / BGSC 10A6 / LMG 26770 / FZB42) (Bacillus amyloliquefaciens subsp. plantarum).